A 491-amino-acid chain; its full sequence is UDP-N-acetylmuramate--L-alanine ligase (491 aa).

126-132 provides a ligand contact to ATP; the sequence is GTHGKTT.

It belongs to the MurCDEF family.

Its subcellular location is the cytoplasm. The enzyme catalyses UDP-N-acetyl-alpha-D-muramate + L-alanine + ATP = UDP-N-acetyl-alpha-D-muramoyl-L-alanine + ADP + phosphate + H(+). It participates in cell wall biogenesis; peptidoglycan biosynthesis. In terms of biological role, cell wall formation. This is UDP-N-acetylmuramate--L-alanine ligase from Escherichia coli O1:K1 / APEC.